A 439-amino-acid chain; its full sequence is Ribosomal protein uS12 methylthiotransferase RimO (439 aa).

An MTTase N-terminal domain is found at 5–115 (PKIGFVSLGC…LIEAVHTHAP (111 aa)). [4Fe-4S] cluster-binding residues include C14, C50, C79, C146, C150, and C153. The Radical SAM core domain maps to 132-369 (LTPRHYSYLK…MGLQAQISTD (238 aa)). The TRAM domain occupies 372–439 (QRFVGTEQQV…ESTEYDLIAD (68 aa)).

It belongs to the methylthiotransferase family. RimO subfamily. [4Fe-4S] cluster serves as cofactor.

The protein resides in the cytoplasm. The enzyme catalyses L-aspartate(89)-[ribosomal protein uS12]-hydrogen + (sulfur carrier)-SH + AH2 + 2 S-adenosyl-L-methionine = 3-methylsulfanyl-L-aspartate(89)-[ribosomal protein uS12]-hydrogen + (sulfur carrier)-H + 5'-deoxyadenosine + L-methionine + A + S-adenosyl-L-homocysteine + 2 H(+). Functionally, catalyzes the methylthiolation of an aspartic acid residue of ribosomal protein uS12. The chain is Ribosomal protein uS12 methylthiotransferase RimO from Francisella tularensis subsp. novicida (strain U112).